The sequence spans 282 residues: Pantothenate synthetase (282 aa).

30–37 (MGYLHEGH) provides a ligand contact to ATP. The active-site Proton donor is His37. Gln61 serves as a coordination point for (R)-pantoate. Gln61 contributes to the beta-alanine binding site. Residue 147 to 150 (GMKD) participates in ATP binding. Position 153 (Gln153) interacts with (R)-pantoate. Residues Val176 and 184–187 (KSSR) each bind ATP.

The protein belongs to the pantothenate synthetase family. In terms of assembly, homodimer.

It localises to the cytoplasm. The enzyme catalyses (R)-pantoate + beta-alanine + ATP = (R)-pantothenate + AMP + diphosphate + H(+). It functions in the pathway cofactor biosynthesis; (R)-pantothenate biosynthesis; (R)-pantothenate from (R)-pantoate and beta-alanine: step 1/1. Its function is as follows. Catalyzes the condensation of pantoate with beta-alanine in an ATP-dependent reaction via a pantoyl-adenylate intermediate. The polypeptide is Pantothenate synthetase (Bacillus cereus (strain AH187)).